Consider the following 420-residue polypeptide: Phytoene synthase 1, chloroplastic (420 aa).

The N-terminal 70 residues, 1–70 (MAAITLLRSA…GEIARTSPVY (70 aa)), are a transit peptide targeting the chloroplast.

Belongs to the phytoene/squalene synthase family. Expressed in leaves. Highly expressed in developing leaves. Expressed at low levels in roots.

The protein localises to the plastid. The protein resides in the chloroplast membrane. Its subcellular location is the chloroplast. It localises to the plastoglobule. The enzyme catalyses 2 (2E,6E,10E)-geranylgeranyl diphosphate = 15-cis-phytoene + 2 diphosphate. In terms of biological role, catalyzes the conversion of geranylgeranyl diphosphate to phytoene. Mediates the first committed step in carotenoid biosynthesis. In Oryza sativa subsp. japonica (Rice), this protein is Phytoene synthase 1, chloroplastic.